The primary structure comprises 417 residues: Serine hydroxymethyltransferase (417 aa).

(6S)-5,6,7,8-tetrahydrofolate contacts are provided by residues L121 and 125 to 127; that span reads GHL. An N6-(pyridoxal phosphate)lysine modification is found at K229. 355–357 is a binding site for (6S)-5,6,7,8-tetrahydrofolate; that stretch reads SPF.

Belongs to the SHMT family. Homodimer. Requires pyridoxal 5'-phosphate as cofactor.

It localises to the cytoplasm. The enzyme catalyses (6R)-5,10-methylene-5,6,7,8-tetrahydrofolate + glycine + H2O = (6S)-5,6,7,8-tetrahydrofolate + L-serine. Its pathway is one-carbon metabolism; tetrahydrofolate interconversion. The protein operates within amino-acid biosynthesis; glycine biosynthesis; glycine from L-serine: step 1/1. Catalyzes the reversible interconversion of serine and glycine with tetrahydrofolate (THF) serving as the one-carbon carrier. This reaction serves as the major source of one-carbon groups required for the biosynthesis of purines, thymidylate, methionine, and other important biomolecules. Also exhibits THF-independent aldolase activity toward beta-hydroxyamino acids, producing glycine and aldehydes, via a retro-aldol mechanism. The polypeptide is Serine hydroxymethyltransferase (Buchnera aphidicola subsp. Schizaphis graminum (strain Sg)).